A 288-amino-acid polypeptide reads, in one-letter code: Glucose-1-phosphate thymidylyltransferase (288 aa).

Mg(2+)-binding residues include D108 and D223.

Belongs to the glucose-1-phosphate thymidylyltransferase family. In terms of assembly, homotetramer. The cofactor is Mg(2+).

It carries out the reaction dTTP + alpha-D-glucose 1-phosphate + H(+) = dTDP-alpha-D-glucose + diphosphate. Its function is as follows. Catalyzes the formation of dTDP-glucose, from dTTP and glucose 1-phosphate, as well as its pyrophosphorolysis. This is Glucose-1-phosphate thymidylyltransferase (rmlA1) from Neisseria meningitidis serogroup A / serotype 4A (strain DSM 15465 / Z2491).